Consider the following 127-residue polypeptide: Flagellar hook-basal body complex protein FliE (127 aa).

The protein belongs to the FliE family.

It localises to the bacterial flagellum basal body. The chain is Flagellar hook-basal body complex protein FliE from Leptospira interrogans serogroup Icterohaemorrhagiae serovar copenhageni (strain Fiocruz L1-130).